The following is a 161-amino-acid chain: NADH:FMN oxidoreductase (161 aa).

FMN-binding positions include Asp-30, 37–40 (AAST), 54–61 (CVQNSSTT), Ala-88, Arg-94, and Phe-151.

It belongs to the non-flavoprotein flavin reductase family.

Its subcellular location is the cytoplasm. The catalysed reaction is FMNH2 + NAD(+) = FMN + NADH + 2 H(+). The enzyme catalyses FADH2 + NAD(+) = FAD + NADH + 2 H(+). The protein operates within sulfur metabolism; dibenzothiophene degradation. An NADH:FMN oxidoreductase which supplies reduced FMN for the '4S' desulfurization pathway that removes covalently bound sulfur from dibenzothiophene (DBT) without breaking carbon-carbon bonds. Can also use FAD. Provides DszC and probably also DszA (DBT-monooxygenase and DBTO2-monooxygenase respectively) with reduced flavin (FMN and/or FAD). The protein is NADH:FMN oxidoreductase of Mycolicibacterium goodii (Mycobacterium goodii).